The chain runs to 685 residues: DNA-directed RNA polymerase subunit beta' (685 aa).

Cys69, Cys71, Cys87, and Cys90 together coordinate Zn(2+). Mg(2+) is bound by residues Asp489, Asp491, and Asp493.

The protein belongs to the RNA polymerase beta' chain family. RpoC1 subfamily. As to quaternary structure, in plastids the minimal PEP RNA polymerase catalytic core is composed of four subunits: alpha, beta, beta', and beta''. When a (nuclear-encoded) sigma factor is associated with the core the holoenzyme is formed, which can initiate transcription. It depends on Mg(2+) as a cofactor. Zn(2+) serves as cofactor.

It is found in the plastid. The protein resides in the chloroplast. The catalysed reaction is RNA(n) + a ribonucleoside 5'-triphosphate = RNA(n+1) + diphosphate. Functionally, DNA-dependent RNA polymerase catalyzes the transcription of DNA into RNA using the four ribonucleoside triphosphates as substrates. This chain is DNA-directed RNA polymerase subunit beta', found in Gossypium hirsutum (Upland cotton).